Here is a 255-residue protein sequence, read N- to C-terminus: 4-hydroxy-tetrahydrodipicolinate reductase (255 aa).

Residues 9-14 (GYRGKM), 89-91 (GTT), and 115-118 (APNF) contribute to the NAD(+) site. The active-site Proton donor/acceptor is histidine 145. Histidine 146 is a binding site for (S)-2,3,4,5-tetrahydrodipicolinate. Lysine 149 (proton donor) is an active-site residue. A (S)-2,3,4,5-tetrahydrodipicolinate-binding site is contributed by 155–156 (GT).

Belongs to the DapB family.

The protein localises to the cytoplasm. The enzyme catalyses (S)-2,3,4,5-tetrahydrodipicolinate + NAD(+) + H2O = (2S,4S)-4-hydroxy-2,3,4,5-tetrahydrodipicolinate + NADH + H(+). It catalyses the reaction (S)-2,3,4,5-tetrahydrodipicolinate + NADP(+) + H2O = (2S,4S)-4-hydroxy-2,3,4,5-tetrahydrodipicolinate + NADPH + H(+). It functions in the pathway amino-acid biosynthesis; L-lysine biosynthesis via DAP pathway; (S)-tetrahydrodipicolinate from L-aspartate: step 4/4. Catalyzes the conversion of 4-hydroxy-tetrahydrodipicolinate (HTPA) to tetrahydrodipicolinate. The chain is 4-hydroxy-tetrahydrodipicolinate reductase from Streptococcus uberis (strain ATCC BAA-854 / 0140J).